The sequence spans 491 residues: V-type proton ATPase subunit B 1 (491 aa).

Arg-380 contributes to the ATP binding site.

Belongs to the ATPase alpha/beta chains family. As to quaternary structure, V-ATPase is a heteromultimeric enzyme made up of two complexes: the ATP-hydrolytic V1 complex and the proton translocation V0 complex. The V1 complex consists of three catalytic AB heterodimers that form a heterohexamer, three peripheral stalks each consisting of EG heterodimers, one central rotor including subunits D and F, and the regulatory subunits C and H. The proton translocation complex V0 consists of the proton transport subunit a, a ring of proteolipid subunits c9c'', rotary subunit d, subunits e and f, and the accessory subunits vah-19/Ac45 and vah-20/PRR. In terms of tissue distribution, expressed ubiquitously. Highly expressed in the H-shaped excretory cell, the excretory pore, the intestine, and hypodermal cells. Expressed in the nervous system. Expressed at low levels in muscles.

Its function is as follows. Non-catalytic subunit of the V1 complex of vacuolar(H+)-ATPase (V-ATPase), a multisubunit enzyme composed of a peripheral complex (V1) that hydrolyzes ATP and a membrane integral complex (V0) that translocates protons. V-ATPase is responsible for acidifying and maintaining the pH of intracellular compartments and in some cell types, is targeted to the plasma membrane, where it is responsible for acidifying the extracellular environment. Essential for the proper assembly and activity of V-ATPase. Required maternally for early embryogenesis and zygotically during morphogenesis. Specifically, involved in the clearance of apoptotic cell corpses in embryos. Also, during embryonic development, the V-ATPase is required to repress fusion of epidermal cells probably by negatively regulating eff-1-mediated cell fusion. In neurons, required for necrotic cell death by promoting intracellular acidification. Required for cell death induced by hypoxia. Required for acidification of synaptic vesicles and the release of neurotransmitters from adult neurons. The sequence is that of V-type proton ATPase subunit B 1 from Caenorhabditis elegans.